The chain runs to 380 residues: Probable protein phosphatase 2C 2 (380 aa).

A PPM-type phosphatase domain is found at 122–376 (GYSVYCKRGK…DDISVMLIQL (255 aa)). The Mn(2+) site is built by Asp-158, Gly-159, Asp-321, and Asp-367.

Belongs to the PP2C family. Mg(2+) is required as a cofactor. It depends on Mn(2+) as a cofactor.

It catalyses the reaction O-phospho-L-seryl-[protein] + H2O = L-seryl-[protein] + phosphate. The catalysed reaction is O-phospho-L-threonyl-[protein] + H2O = L-threonyl-[protein] + phosphate. The sequence is that of Probable protein phosphatase 2C 2 from Arabidopsis thaliana (Mouse-ear cress).